The chain runs to 261 residues: Cytochrome c oxidase subunit 3 (261 aa).

Residues 1 to 15 (MSHQAHAYHMVDPSP) lie on the Mitochondrial matrix side of the membrane. The helical transmembrane segment at 16-34 (WPLTGAGAALLMTSGLAMW) threads the bilayer. Residues 35 to 40 (FHKNSC) are Mitochondrial intermembrane-facing. The chain crosses the membrane as a helical span at residues 41–66 (ILMTLGLILMLLTMYQWWRDIVREGT). Residues 67–72 (FLGHHT) are Mitochondrial matrix-facing. The chain crosses the membrane as a helical span at residues 73–105 (SPVQQGLRYGMILFIISEVCFFAGFFWAFYHAS). The Mitochondrial intermembrane portion of the chain corresponds to 106-128 (LAPTPELGLTWPPTGINPLNPFE). A helical transmembrane segment spans residues 129 to 152 (VPLLNTAVLLASGVSVTWAHHSIT). Residues 153-155 (EKN) lie on the Mitochondrial matrix side of the membrane. Residues 156-183 (RTETTQALTLTVLLGLYFTALQIMEYYE) traverse the membrane as a helical segment. Over 184–190 (TPFTMAD) the chain is Mitochondrial intermembrane. Residues 191–223 (GVYGSTFFVATGFHGLHVIIGSLFLLTCLLRHL) form a helical membrane-spanning segment. Topologically, residues 224-232 (QYHFTSKHH) are mitochondrial matrix. The helical transmembrane segment at 233–256 (FGFEAAAWYWHFVDVVWLFLYISI) threads the bilayer. Over 257 to 261 (YWWGS) the chain is Mitochondrial intermembrane.

This sequence belongs to the cytochrome c oxidase subunit 3 family. Component of the cytochrome c oxidase (complex IV, CIV), a multisubunit enzyme composed of 14 subunits. The complex is composed of a catalytic core of 3 subunits MT-CO1, MT-CO2 and MT-CO3, encoded in the mitochondrial DNA, and 11 supernumerary subunits COX4I, COX5A, COX5B, COX6A, COX6B, COX6C, COX7A, COX7B, COX7C, COX8 and NDUFA4, which are encoded in the nuclear genome. The complex exists as a monomer or a dimer and forms supercomplexes (SCs) in the inner mitochondrial membrane with NADH-ubiquinone oxidoreductase (complex I, CI) and ubiquinol-cytochrome c oxidoreductase (cytochrome b-c1 complex, complex III, CIII), resulting in different assemblies (supercomplex SCI(1)III(2)IV(1) and megacomplex MCI(2)III(2)IV(2)).

It is found in the mitochondrion inner membrane. It catalyses the reaction 4 Fe(II)-[cytochrome c] + O2 + 8 H(+)(in) = 4 Fe(III)-[cytochrome c] + 2 H2O + 4 H(+)(out). In terms of biological role, component of the cytochrome c oxidase, the last enzyme in the mitochondrial electron transport chain which drives oxidative phosphorylation. The respiratory chain contains 3 multisubunit complexes succinate dehydrogenase (complex II, CII), ubiquinol-cytochrome c oxidoreductase (cytochrome b-c1 complex, complex III, CIII) and cytochrome c oxidase (complex IV, CIV), that cooperate to transfer electrons derived from NADH and succinate to molecular oxygen, creating an electrochemical gradient over the inner membrane that drives transmembrane transport and the ATP synthase. Cytochrome c oxidase is the component of the respiratory chain that catalyzes the reduction of oxygen to water. Electrons originating from reduced cytochrome c in the intermembrane space (IMS) are transferred via the dinuclear copper A center (CU(A)) of subunit 2 and heme A of subunit 1 to the active site in subunit 1, a binuclear center (BNC) formed by heme A3 and copper B (CU(B)). The BNC reduces molecular oxygen to 2 water molecules using 4 electrons from cytochrome c in the IMS and 4 protons from the mitochondrial matrix. This is Cytochrome c oxidase subunit 3 (MT-CO3) from Petromyzon marinus (Sea lamprey).